A 118-amino-acid polypeptide reads, in one-letter code: Acidic phospholipase A2 CM-I (118 aa).

Intrachain disulfides connect Cys-11–Cys-70, Cys-26–Cys-117, Cys-28–Cys-44, Cys-43–Cys-98, Cys-50–Cys-91, Cys-59–Cys-84, and Cys-77–Cys-89. 3 residues coordinate Ca(2+): Tyr-27, Gly-29, and Gly-31. Residue His-47 is part of the active site. Ca(2+) is bound at residue Asp-48. Asp-92 is an active-site residue.

Belongs to the phospholipase A2 family. Group I subfamily. D49 sub-subfamily. The cofactor is Ca(2+). In terms of tissue distribution, expressed by the venom gland.

The protein resides in the secreted. The enzyme catalyses a 1,2-diacyl-sn-glycero-3-phosphocholine + H2O = a 1-acyl-sn-glycero-3-phosphocholine + a fatty acid + H(+). Its function is as follows. Snake venom phospholipase A2 (PLA2) that causes myonecrosis when injected intramuscularly, shows indirect hemolytic activity, abolishes twitches evoked by indirect stimulation earlier than those by direct stimulation (in the mouse phrenic nerve-diaphragm preparation) but does not produce complete neuromuscular block (up to 30 ug/ml) (in the chick biventer cervicis nerve-muscle preparation). PLA2 catalyzes the calcium-dependent hydrolysis of the 2-acyl groups in 3-sn-phosphoglycerides. The chain is Acidic phospholipase A2 CM-I from Naja mossambica (Mozambique spitting cobra).